The sequence spans 443 residues: Probable nitrate/nitrite antiporter NarK1 (443 aa).

12 helical membrane-spanning segments follow: residues 23–43, 56–76, 79–99, 108–128, 142–164, 182–202, 230–250, 255–275, 298–318, 329–349, 368–388, and 401–421; these read TLAFTLMFAAWLMFGVLGVPI, WISALAILNGSLWRLLAGILA, YGGRLVFTLMLFFTAIPAYLV, LLLYAFLVGFAGNSFSVGIAW, LGVFGAGNVGASVTKFIGPALIA, FIPFLYAVLLVLMGFVLWFGT, FSLYYVVVFGAYVALSAWLPK, VFGLPLHEAALLTALFIFPAS, FGIILLASGVLMMPEGHIVLY, FTMGVELFTLLVFLIGVGMGI, AVGGLVGMLGALGGFFLPPLF, and TFFVLFLLAAISFLWMHLTVL.

It belongs to the major facilitator superfamily. Nitrate/nitrite porter (TC 2.A.1.8) family.

It is found in the cell membrane. It catalyses the reaction nitrate(in) + nitrite(out) = nitrate(out) + nitrite(in). Its function is as follows. Probable nitrate/nitrite antiporter that may be involved in nitrate import and nitrite export during anaerobic growth. This Thermus thermophilus protein is Probable nitrate/nitrite antiporter NarK1.